A 139-amino-acid polypeptide reads, in one-letter code: Small ribosomal subunit protein bS6 (139 aa).

Residues 120 to 139 (KGASKVETPTGPESTDIQEK) form a disordered region. Over residues 130-139 (GPESTDIQEK) the composition is skewed to polar residues.

It belongs to the bacterial ribosomal protein bS6 family.

Functionally, binds together with bS18 to 16S ribosomal RNA. This is Small ribosomal subunit protein bS6 (rpsF) from Borreliella burgdorferi (strain ATCC 35210 / DSM 4680 / CIP 102532 / B31) (Borrelia burgdorferi).